The following is a 277-amino-acid chain: Shikimate dehydrogenase (NADP(+)) (277 aa).

Residues 19–21 (SKS) and T66 each bind shikimate. Catalysis depends on K70, which acts as the Proton acceptor. D82 contacts NADP(+). Positions 91 and 107 each coordinate shikimate. Residues 133–137 (GAGGA), 157–162 (NRTRAR), and L222 each bind NADP(+). Y224 is a binding site for shikimate. Residue G245 coordinates NADP(+).

It belongs to the shikimate dehydrogenase family. As to quaternary structure, homodimer.

It catalyses the reaction shikimate + NADP(+) = 3-dehydroshikimate + NADPH + H(+). It functions in the pathway metabolic intermediate biosynthesis; chorismate biosynthesis; chorismate from D-erythrose 4-phosphate and phosphoenolpyruvate: step 4/7. In terms of biological role, involved in the biosynthesis of the chorismate, which leads to the biosynthesis of aromatic amino acids. Catalyzes the reversible NADPH linked reduction of 3-dehydroshikimate (DHSA) to yield shikimate (SA). The sequence is that of Shikimate dehydrogenase (NADP(+)) from Roseobacter denitrificans (strain ATCC 33942 / OCh 114) (Erythrobacter sp. (strain OCh 114)).